A 377-amino-acid polypeptide reads, in one-letter code: Probable G-protein coupled receptor 27 (377 aa).

Residues Met-1–Ala-24 are Extracellular-facing. A glycan (N-linked (GlcNAc...) asparagine) is linked at Asn-3. A helical transmembrane segment spans residues Thr-25 to Val-45. Residues Arg-46 to Tyr-56 are Cytoplasmic-facing. Residues Leu-57–Met-77 traverse the membrane as a helical segment. Residues Leu-78–Leu-98 lie on the Extracellular side of the membrane. Cysteines 96 and 173 form a disulfide. A helical transmembrane segment spans residues Leu-99 to Val-119. At Thr-120–Cys-140 the chain is on the cytoplasmic side. The helical transmembrane segment at Ala-141–Leu-161 threads the bilayer. Topologically, residues Asp-162–Pro-183 are extracellular. A helical membrane pass occupies residues Gly-184–Leu-204. The Cytoplasmic portion of the chain corresponds to Arg-205–Met-287. Residues Phe-288 to Leu-308 traverse the membrane as a helical segment. Topologically, residues Arg-309–Leu-322 are extracellular. A helical transmembrane segment spans residues Thr-323–Phe-343. Residues Asn-344–Leu-377 lie on the Cytoplasmic side of the membrane.

The protein belongs to the G-protein coupled receptor 1 family. As to expression, expressed as a 3.0 kb transcript, in whole brain, hippocampus, striatum, frontal cortex, thalamus, pons and hypothalamus. A lower molecular weight transcript was detected in all regions examined, except the hypothalamus.

Its subcellular location is the cell membrane. Orphan receptor. Possible candidate for amine-like G-protein coupled receptor. In Rattus norvegicus (Rat), this protein is Probable G-protein coupled receptor 27 (Gpr27).